A 572-amino-acid chain; its full sequence is Glutathione hydrolase 5 proenzyme (572 aa).

The Cytoplasmic portion of the chain corresponds to 1–6; it reads MAWGHR. Residues 7–29 traverse the membrane as a helical; Signal-anchor for type II membrane protein segment; it reads TTVCLVLLGVSLGLAIIVLAVVL. Residues 30–572 lie on the Extracellular side of the membrane; the sequence is PHHQASCRPD…LRKAGKASGY (543 aa). Asn98 carries an N-linked (GlcNAc...) asparagine glycan. Arg110 serves as a coordination point for L-glutamate. N-linked (GlcNAc...) asparagine glycans are attached at residues Asn185, Asn194, Asn204, Asn277, Asn303, Asn347, and Asn377. Thr388 (nucleophile) is an active-site residue. Residues Thr406, Glu427, and 453–454 each bind L-glutamate; that span reads SS.

The protein belongs to the gamma-glutamyltransferase family. As to quaternary structure, heterodimer composed of the light and heavy chains. The active site is located in the light chain. Cleaved by autocatalysis into a large and a small subunit. In terms of processing, glycosylated. As to expression, widely expressed, but at low level, except in the airway epithelial cells. Detected in brain, heart, kidney, liver, lung, spleen, testis and trachea.

It is found in the membrane. The catalysed reaction is glutathione + H2O = L-cysteinylglycine + L-glutamate. It catalyses the reaction an S-substituted glutathione + H2O = an S-substituted L-cysteinylglycine + L-glutamate. The enzyme catalyses leukotriene C4 + H2O = leukotriene D4 + L-glutamate. It carries out the reaction S-[(2E,6E,10E)-geranylgeranyl]-L-glutathione + H2O = S-[(2E,6E,10E)-geranylgeranyl]-L-cysteinylglycine + L-glutamate. The catalysed reaction is an N-terminal (5-L-glutamyl)-[peptide] + an alpha-amino acid = 5-L-glutamyl amino acid + an N-terminal L-alpha-aminoacyl-[peptide]. It functions in the pathway lipid metabolism; leukotriene D4 biosynthesis. It participates in sulfur metabolism; glutathione metabolism. Its activity is regulated as follows. Inhibited by serine-borate. Cleaves the gamma-glutamyl bond of extracellular glutathione tripeptide (gamma-Glu-Cys-Gly) and certain glutathione conjugates. Hydrolyzes glutathione releasing L-Glu and Cys-Gly dipeptide which is further metabolized to maintain extracellular cysteine levels but also to provide cysteine necessary for intracellular glutathione synthesis. Among glutathione-S-conjugates metabolizes leukotriene C4 (LTC4) and S-geranylgeranyl-glutathione (GGG), but is inactive toward gamma-glutamyl leucine. Converts extracellular LTC4 to LTD4 during acute inflammatory response. Acts as a negative regulator of GGG bioactivity. GGT5 (via GGG catabolism) and ABCC1 (via extracellular transport) establish GGG gradients within lymphoid tissues to position P2RY8-positive lymphocytes at germinal centers in lymphoid follicles and restrict their chemotactic transmigration from blood vessels to bone marrow parenchyma. The transpeptidation reaction, i.e. the transfer of gamma-glutamyl moiety to an acceptor molecule to yield a new gamma-glutamyl compound requires high concentration of dipeptide acceptor and is considered nonphysiological. This Rattus norvegicus (Rat) protein is Glutathione hydrolase 5 proenzyme (Ggt5).